A 526-amino-acid polypeptide reads, in one-letter code: MLSYTSCAKLICSRYIVSKISFYSLKRCNSTAVVRTRFAPSPTGFLHLGSLRTALFNYLWAKKSNGKFILRLEDTDQKRKVTGSDLEIYKVLKQFNLQWDEGPIVGGPYGPYEQSSRLQIYQKYAQHLIETGRAYVSYSVPIATTKIDSSTKYHEISIDDLTDAQRKLYKSKKFPYVVRFRMKEPSPFTDLVYGKIAIKSDSREIEESNNFVILKSDGFPTYHFANVVDDHLMHITHVIRGEEWVPSTIKHIQLYEAFGWKPPKFAHLPLLVNPDGSKLSKRQNDAHVSSLLQEGFLPEAILNFIALMGWSSRQKSDFLPMKELIDLFSIDKLTKSSSIVAFEKLYFLNKNYLRRAISDVNRLDELIELVQPRLIQKFSHSSRSHDKSYTKKLLLLLKNKVHTIKEFEKIVFYFYEASDLQQIRSLVSSLITVEELPKILTTILNKFETIEWNTHEIQISLKEIAMEHQMPLKKIQSLLRYGLCGNLPGGGISDTISLLGKETVKSRLERLLLSLKHELPKRSCIV.

A mitochondrion-targeting transit peptide spans 1 to 38 (MLSYTSCAKLICSRYIVSKISFYSLKRCNSTAVVRTRF). 37–39 (RFA) contributes to the L-glutamate binding site. A 'HIGH' region motif is present at residues 42 to 50 (PTGFLHLGS). H47 serves as a coordination point for ATP. Residues E73, 222–226 (YHFAN), and R240 contribute to the L-glutamate site. ATP is bound by residues E243 and 278-282 (KLSKR). A 'KMSKS' region motif is present at residues 278 to 282 (KLSKR).

It belongs to the class-I aminoacyl-tRNA synthetase family. Glutamate--tRNA ligase type 1 subfamily.

The protein localises to the mitochondrion. The catalysed reaction is tRNA(Glu) + L-glutamate + ATP = L-glutamyl-tRNA(Glu) + AMP + diphosphate. In terms of biological role, catalyzes the attachment of glutamate to tRNA(Glu) in a two-step reaction: glutamate is first activated by ATP to form Glu-AMP and then transferred to the acceptor end of tRNA(Glu). This Schizosaccharomyces pombe (strain 972 / ATCC 24843) (Fission yeast) protein is Glutamate--tRNA ligase, mitochondrial (mse1).